The following is a 415-amino-acid chain: Multidrug resistance protein MdtA (415 aa).

Residues 1–21 (MKGSYKSRWVIVIVVVIAAIA) form the signal peptide. 2 disordered regions span residues 32–60 (SRSA…GPLA) and 392–415 (EAQS…GARS). Positions 399-415 (PEEKATSREYAKKGARS) are enriched in basic and acidic residues.

The protein belongs to the membrane fusion protein (MFP) (TC 8.A.1) family. Part of a tripartite efflux system composed of MdtA, MdtB and MdtC.

Its subcellular location is the cell inner membrane. Its function is as follows. The MdtABC tripartite complex confers resistance against novobiocin and deoxycholate. The protein is Multidrug resistance protein MdtA of Escherichia coli (strain 55989 / EAEC).